We begin with the raw amino-acid sequence, 258 residues long: 3-deoxy-manno-octulosonate cytidylyltransferase (258 aa).

This sequence belongs to the KdsB family.

It is found in the cytoplasm. It carries out the reaction 3-deoxy-alpha-D-manno-oct-2-ulosonate + CTP = CMP-3-deoxy-beta-D-manno-octulosonate + diphosphate. It functions in the pathway nucleotide-sugar biosynthesis; CMP-3-deoxy-D-manno-octulosonate biosynthesis; CMP-3-deoxy-D-manno-octulosonate from 3-deoxy-D-manno-octulosonate and CTP: step 1/1. Its pathway is bacterial outer membrane biogenesis; lipopolysaccharide biosynthesis. Its function is as follows. Activates KDO (a required 8-carbon sugar) for incorporation into bacterial lipopolysaccharide in Gram-negative bacteria. This is 3-deoxy-manno-octulosonate cytidylyltransferase from Parvibaculum lavamentivorans (strain DS-1 / DSM 13023 / NCIMB 13966).